Reading from the N-terminus, the 344-residue chain is Aurora kinase B (344 aa).

Phosphothreonine is present on T35. Phosphoserine is present on S62. A Phosphothreonine modification is found at T64. One can recognise a Protein kinase domain in the interval 77-327 (FEIGRPLGKG…LAQVSAHPWV (251 aa)). Residues 83–91 (LGKGKFGNV) and K106 each bind ATP. D200 serves as the catalytic Proton acceptor. At K215 the chain carries N6-acetyllysine. At S227 the chain carries Phosphoserine. T232 carries the phosphothreonine; by autocatalysis modification.

Belongs to the protein kinase superfamily. Ser/Thr protein kinase family. Aurora subfamily. In terms of assembly, component of the chromosomal passenger complex (CPC) composed of at least BIRC5/survivin, CDCA8/borealin, INCENP, AURKB or AURKC; predominantly independent AURKB- and AURKC-containing complexes exist. Associates with RACGAP1 during M phase. Interacts with SPDYC; this interaction may be required for proper localization of active, Thr-232-phosphorylated AURKB form during prometaphase and metaphase. Interacts with p53/TP53. Interacts (via the middle kinase domain) with NOC2L (via the N- and C-terminus domains). Interacts with CDCA1. Interacts with EVI5. Interacts with JTB. Interacts with NDC80. Interacts with PSMA3. Interacts with RNF2/RING1B. Interacts with SEPTIN1. Interacts with SIRT2. Interacts with TACC1. Interacts with TTC28. In terms of processing, the phosphorylation of Thr-232 requires the binding to INCENP and occurs by means of an autophosphorylation mechanism. Thr-232 phosphorylation is indispensable for the AURKB kinase activity. Acetylated at Lys-215 by KAT5 at kinetochores, increasing AURKB activity and promoting accurate chromosome segregation in mitosis. Post-translationally, ubiquitinated by different BCR (BTB-CUL3-RBX1) E3 ubiquitin ligase complexes. Ubiquitinated by the BCR(KLHL9-KLHL13) E3 ubiquitin ligase complex, ubiquitination leads to removal from mitotic chromosomes and is required for cytokinesis. During anaphase, the BCR(KLHL21) E3 ubiquitin ligase complex recruits the CPC complex from chromosomes to the spindle midzone and mediates the ubiquitination of AURKB. Ubiquitination of AURKB by BCR(KLHL21) E3 ubiquitin ligase complex may not lead to its degradation by the proteasome. Deubiquitinated by USP35; inhibiting CDH1-mediated degradation of AURKB.

The protein resides in the nucleus. Its subcellular location is the chromosome. It localises to the centromere. It is found in the kinetochore. The protein localises to the cytoplasm. The protein resides in the cytoskeleton. Its subcellular location is the spindle. It localises to the midbody. It catalyses the reaction L-seryl-[protein] + ATP = O-phospho-L-seryl-[protein] + ADP + H(+). The enzyme catalyses L-threonyl-[protein] + ATP = O-phospho-L-threonyl-[protein] + ADP + H(+). Activity is greatly increased when AURKB is within the CPC complex. In particular, AURKB-phosphorylated INCENP acts as an activator of AURKB. Positive feedback between HASPIN and AURKB contributes to CPC localization. Serine/threonine-protein kinase component of the chromosomal passenger complex (CPC), a complex that acts as a key regulator of mitosis. The CPC complex has essential functions at the centromere in ensuring correct chromosome alignment and segregation and is required for chromatin-induced microtubule stabilization and spindle assembly. Involved in the bipolar attachment of spindle microtubules to kinetochores and is a key regulator for the onset of cytokinesis during mitosis. Required for central/midzone spindle assembly and cleavage furrow formation. Key component of the cytokinesis checkpoint, a process required to delay abscission to prevent both premature resolution of intercellular chromosome bridges and accumulation of DNA damage: phosphorylates CHMP4C, leading to retain abscission-competent VPS4 (VPS4A and/or VPS4B) at the midbody ring until abscission checkpoint signaling is terminated at late cytokinesis. AURKB phosphorylates the CPC complex subunits BIRC5/survivin, CDCA8/borealin and INCENP. Phosphorylation of INCENP leads to increased AURKB activity. Other known AURKB substrates involved in centromeric functions and mitosis are CENPA, DES/desmin, GPAF, KIF2C, NSUN2, RACGAP1, SEPTIN1, VIM/vimentin, HASPIN, and histone H3. A positive feedback loop involving HASPIN and AURKB contributes to localization of CPC to centromeres. Phosphorylation of VIM controls vimentin filament segregation in cytokinetic process, whereas histone H3 is phosphorylated at 'Ser-10' and 'Ser-28' during mitosis (H3S10ph and H3S28ph, respectively). AURKB is also required for kinetochore localization of BUB1 and SGO1. Phosphorylation of p53/TP53 negatively regulates its transcriptional activity. Key regulator of active promoters in resting B- and T-lymphocytes: acts by mediating phosphorylation of H3S28ph at active promoters in resting B-cells, inhibiting RNF2/RING1B-mediated ubiquitination of histone H2A and enhancing binding and activity of the USP16 deubiquitinase at transcribed genes. Acts as an inhibitor of CGAS during mitosis: catalyzes phosphorylation of the N-terminus of CGAS during the G2-M transition, blocking CGAS liquid phase separation and activation, and thereby preventing CGAS-induced autoimmunity. Phosphorylates KRT5 during anaphase and telophase. Phosphorylates ATXN10 which promotes phosphorylation of ATXN10 by PLK1 and may play a role in the regulation of cytokinesis and stimulating the proteasomal degradation of ATXN10. This is Aurora kinase B (AURKB) from Sus scrofa (Pig).